The sequence spans 85 residues: uncharacterized protein (85 aa).

Residues 39–59 (FILFEISMYIIFIVTFCYKII) form a helical membrane-spanning segment.

The protein localises to the host membrane. This is an uncharacterized protein from Gallid herpesvirus 2 (strain Chicken/Md5/ATCC VR-987) (GaHV-2).